We begin with the raw amino-acid sequence, 334 residues long: MKRISLTQYLIEEQRLHNNIPAELRLLIEVVARACKTISHAVGKGALGEVLGSAQSENVQGEVQKKLDIISNDILLEANEWGGHLAAMASEEMETIHPIPNRYPMGEYLLLFDPLDGSSNIDVNVSIGTIFSVLKAADGMQAAKEADFLQAGSKQVVAGYAVYGPQTVLVLTTGNGVQCFTLDREMGSWVMTQKNMQIPADTKEFAINASNARHWYPPVKRYVDEMLAGTTGPRGKDFNMRWIASMVADVHRILNRGGIFMYPADAREPDKPGKLRLMYEANPMAFLVEQAGGAATDGQQRILDIQPEKLHQRVPVFLGSKNEVDLVTSYHKTK.

Mg(2+) is bound by residues Glu91, Asp113, Leu115, and Asp116. Substrate-binding positions include 116–119 (DGSS), Asn208, and Lys274. Mg(2+) is bound at residue Glu280.

The protein belongs to the FBPase class 1 family. Homotetramer. The cofactor is Mg(2+).

The protein localises to the cytoplasm. It carries out the reaction beta-D-fructose 1,6-bisphosphate + H2O = beta-D-fructose 6-phosphate + phosphate. The protein operates within carbohydrate biosynthesis; gluconeogenesis. The polypeptide is Fructose-1,6-bisphosphatase class 1 (Herminiimonas arsenicoxydans).